The sequence spans 241 residues: Exosome complex component RRP41 homolog (241 aa).

At Met1 the chain carries N-acetylmethionine.

This sequence belongs to the RNase PH family. In terms of assembly, component of the RNA exosome complex. Interacts with RPP4.

Its subcellular location is the cytoplasm. The protein localises to the nucleus. It localises to the nucleolus. Its function is as follows. Non-catalytic component of the RNA exosome complex which has 3'-&gt;5' exoribonuclease activity and participates in a multitude of cellular RNA processing, maturation and degradation events. In vitro, is a processive phosphorolytic exonuclease and requires a single-stranded poly(A) tail on the substrate RNA for its activity. Can complement the growth defect of a yeast mutant lacking RRP41 exonuclease. Required for normal development of female gametophytes. The protein is Exosome complex component RRP41 homolog of Arabidopsis thaliana (Mouse-ear cress).